The chain runs to 307 residues: UDP-N-acetylenolpyruvoylglucosamine reductase (307 aa).

The FAD-binding PCMH-type domain maps to 33–197 (TGGNADFYIT…LEAAFTLAPG (165 aa)). Arg176 is an active-site residue. The active-site Proton donor is the Ser226. The active site involves Glu296.

The protein belongs to the MurB family. Requires FAD as cofactor.

The protein resides in the cytoplasm. The catalysed reaction is UDP-N-acetyl-alpha-D-muramate + NADP(+) = UDP-N-acetyl-3-O-(1-carboxyvinyl)-alpha-D-glucosamine + NADPH + H(+). It functions in the pathway cell wall biogenesis; peptidoglycan biosynthesis. Functionally, cell wall formation. The chain is UDP-N-acetylenolpyruvoylglucosamine reductase from Staphylococcus aureus (strain Mu3 / ATCC 700698).